Reading from the N-terminus, the 206-residue chain is LexA repressor (206 aa).

Residues 28–48 (VREIGEAVGLASSSTVHGHLS) constitute a DNA-binding region (H-T-H motif). Catalysis depends on for autocatalytic cleavage activity residues S129 and K167.

The protein belongs to the peptidase S24 family. In terms of assembly, homodimer.

The enzyme catalyses Hydrolysis of Ala-|-Gly bond in repressor LexA.. Functionally, represses a number of genes involved in the response to DNA damage (SOS response), including recA and lexA. In the presence of single-stranded DNA, RecA interacts with LexA causing an autocatalytic cleavage which disrupts the DNA-binding part of LexA, leading to derepression of the SOS regulon and eventually DNA repair. The chain is LexA repressor from Staphylococcus epidermidis (strain ATCC 35984 / DSM 28319 / BCRC 17069 / CCUG 31568 / BM 3577 / RP62A).